A 607-amino-acid chain; its full sequence is SNW/SKI-interacting protein A (607 aa).

Disordered stretches follow at residues 29 to 77 (ERYG…GGAF), 178 to 205 (AQPK…AAFN), 217 to 265 (EMAQ…IPPC), 327 to 434 (LQLK…DRDR), and 516 to 607 (KVMK…ERGR). The segment covering 35–49 (SAQSDAAAAAAKPSG) has biased composition (low complexity). The tract at residues 190 to 353 (SKFIKYKPSQ…QKARMERTGA (164 aa)) is SNW. The segment covering 240–251 (PPVPVMHSPPRP) has biased composition (pro residues). 2 coiled-coil regions span residues 313 to 349 (AREA…ARME) and 391 to 418 (EREA…LEAR). Basic and acidic residues-rich tracts occupy residues 327-339 (LQLK…EQEL), 379-434 (EQPR…DRDR), 516-527 (KVMKTDRFKPDK), 535-550 (RSGK…KQEE), and 562-571 (EVKKGKKAVE).

Belongs to the SNW family. Interacts with FLO6/SIP4. Interacts with DIS1. In terms of tissue distribution, widely expressed.

It localises to the nucleus. In terms of biological role, acts as a positive regulator of drought and salt tolerance. Acts as a positive regulator of cell viability. This Oryza sativa subsp. japonica (Rice) protein is SNW/SKI-interacting protein A.